A 424-amino-acid chain; its full sequence is Serine--tRNA ligase (424 aa).

The interval 109–129 (QEDVPYGESEEDNREERKWGD) is disordered. 231-233 (TAE) contacts L-serine. Residue 262–264 (RSE) participates in ATP binding. Position 285 (Glu-285) interacts with L-serine. 349 to 352 (EISS) lines the ATP pocket. Residue Ser-385 participates in L-serine binding.

The protein belongs to the class-II aminoacyl-tRNA synthetase family. Type-1 seryl-tRNA synthetase subfamily. In terms of assembly, homodimer. The tRNA molecule binds across the dimer.

It localises to the cytoplasm. The catalysed reaction is tRNA(Ser) + L-serine + ATP = L-seryl-tRNA(Ser) + AMP + diphosphate + H(+). The enzyme catalyses tRNA(Sec) + L-serine + ATP = L-seryl-tRNA(Sec) + AMP + diphosphate + H(+). Its pathway is aminoacyl-tRNA biosynthesis; selenocysteinyl-tRNA(Sec) biosynthesis; L-seryl-tRNA(Sec) from L-serine and tRNA(Sec): step 1/1. Its function is as follows. Catalyzes the attachment of serine to tRNA(Ser). Is also able to aminoacylate tRNA(Sec) with serine, to form the misacylated tRNA L-seryl-tRNA(Sec), which will be further converted into selenocysteinyl-tRNA(Sec). This is Serine--tRNA ligase from Shouchella clausii (strain KSM-K16) (Alkalihalobacillus clausii).